Consider the following 211-residue polypeptide: NADH-quinone oxidoreductase subunit C (211 aa).

It belongs to the complex I 30 kDa subunit family. NDH-1 is composed of 14 different subunits. Subunits NuoB, C, D, E, F, and G constitute the peripheral sector of the complex.

The protein localises to the cell inner membrane. The catalysed reaction is a quinone + NADH + 5 H(+)(in) = a quinol + NAD(+) + 4 H(+)(out). NDH-1 shuttles electrons from NADH, via FMN and iron-sulfur (Fe-S) centers, to quinones in the respiratory chain. The immediate electron acceptor for the enzyme in this species is believed to be ubiquinone. Couples the redox reaction to proton translocation (for every two electrons transferred, four hydrogen ions are translocated across the cytoplasmic membrane), and thus conserves the redox energy in a proton gradient. This chain is NADH-quinone oxidoreductase subunit C, found in Azorhizobium caulinodans (strain ATCC 43989 / DSM 5975 / JCM 20966 / LMG 6465 / NBRC 14845 / NCIMB 13405 / ORS 571).